The sequence spans 232 residues: Zinc finger protein RTS2 (232 aa).

A C2H2-type zinc finger spans residues 24 to 48 (YYCQICQRQCKDANGFQSHNKSPSH). Disordered stretches follow at residues 180 to 199 (AKRQTEKVYQPEMKSEISGD) and 211 to 232 (GNGRVNKKKKKVPPRKDGIKFR).

It is found in the nucleus. In Saccharomyces cerevisiae (strain ATCC 204508 / S288c) (Baker's yeast), this protein is Zinc finger protein RTS2 (RTS2).